A 492-amino-acid chain; its full sequence is Bifunctional purine biosynthesis protein PurH (492 aa).

The 144-residue stretch at 1-144 (MKKAILSVSN…KNYKHVTTIV (144 aa)) folds into the MGS-like domain.

It belongs to the PurH family.

It carries out the reaction (6R)-10-formyltetrahydrofolate + 5-amino-1-(5-phospho-beta-D-ribosyl)imidazole-4-carboxamide = 5-formamido-1-(5-phospho-D-ribosyl)imidazole-4-carboxamide + (6S)-5,6,7,8-tetrahydrofolate. The enzyme catalyses IMP + H2O = 5-formamido-1-(5-phospho-D-ribosyl)imidazole-4-carboxamide. Its pathway is purine metabolism; IMP biosynthesis via de novo pathway; 5-formamido-1-(5-phospho-D-ribosyl)imidazole-4-carboxamide from 5-amino-1-(5-phospho-D-ribosyl)imidazole-4-carboxamide (10-formyl THF route): step 1/1. It functions in the pathway purine metabolism; IMP biosynthesis via de novo pathway; IMP from 5-formamido-1-(5-phospho-D-ribosyl)imidazole-4-carboxamide: step 1/1. The polypeptide is Bifunctional purine biosynthesis protein PurH (Staphylococcus aureus (strain Newman)).